A 600-amino-acid polypeptide reads, in one-letter code: Putative heme-binding protein NP_2262A (600 aa).

H180 lines the heme pocket. The tract at residues 261–289 (TSETGHGGADSQTSSESSGGRPSTDPSHD) is disordered. Residues 270 to 285 (DSQTSSESSGGRPSTD) are compositionally biased toward polar residues. An ABM domain is found at 510–598 (GTMGMFYTVK…VLADRPRHVF (89 aa)).

This sequence in the N-terminal section; belongs to the ChdC family.

This chain is Putative heme-binding protein NP_2262A, found in Natronomonas pharaonis (strain ATCC 35678 / DSM 2160 / CIP 103997 / JCM 8858 / NBRC 14720 / NCIMB 2260 / Gabara) (Halobacterium pharaonis).